Here is a 591-residue protein sequence, read N- to C-terminus: NADP-dependent malic enzyme (591 aa).

Residue Y139 is the Proton donor of the active site. An NAD(+)-binding site is contributed by R192. K210 acts as the Proton acceptor in catalysis. 3 residues coordinate a divalent metal cation: E282, D283, and D306. D306 is an NAD(+) binding site. 335–351 (LFLGAGEAGTGIAELIA) contacts NADP(+). N447 provides a ligand contact to NAD(+).

Belongs to the malic enzymes family. Homotetramer. Mg(2+) is required as a cofactor. The cofactor is Mn(2+).

The protein resides in the cytoplasm. The enzyme catalyses (S)-malate + NADP(+) = pyruvate + CO2 + NADPH. It carries out the reaction oxaloacetate + H(+) = pyruvate + CO2. The polypeptide is NADP-dependent malic enzyme (Vitis vinifera (Grape)).